The sequence spans 479 residues: Membrane-bound lytic murein transglycosylase F (479 aa).

Positions 1–15 (MKRLLLVLCYITLLA) are cleaved as a signal peptide. The tract at residues 16–258 (GCQKVVVEQE…HLNEKYFAHV (243 aa)) is non-LT domain. Residues 260–479 (RFDYVDTRAF…QTDAIQPQQP (220 aa)) are LT domain. E303 is a catalytic residue. The tract at residues 457–479 (LQTAEAKETEEKPQTDAIQPQQP) is disordered. A compositionally biased stretch (basic and acidic residues) spans 461-470 (EAKETEEKPQ).

It in the N-terminal section; belongs to the bacterial solute-binding protein 3 family. The protein in the C-terminal section; belongs to the transglycosylase Slt family.

The protein resides in the cell outer membrane. It carries out the reaction Exolytic cleavage of the (1-&gt;4)-beta-glycosidic linkage between N-acetylmuramic acid (MurNAc) and N-acetylglucosamine (GlcNAc) residues in peptidoglycan, from either the reducing or the non-reducing ends of the peptidoglycan chains, with concomitant formation of a 1,6-anhydrobond in the MurNAc residue.. Functionally, murein-degrading enzyme that degrades murein glycan strands and insoluble, high-molecular weight murein sacculi, with the concomitant formation of a 1,6-anhydromuramoyl product. Lytic transglycosylases (LTs) play an integral role in the metabolism of the peptidoglycan (PG) sacculus. Their lytic action creates space within the PG sacculus to allow for its expansion as well as for the insertion of various structures such as secretion systems and flagella. This is Membrane-bound lytic murein transglycosylase F from Shewanella pealeana (strain ATCC 700345 / ANG-SQ1).